Here is a 314-residue protein sequence, read N- to C-terminus: Small ribosomal subunit protein uS2 (314 aa).

Basic and acidic residues-rich tracts occupy residues 244 to 265 (GGHD…GHKD) and 271 to 287 (DRRG…EDRA). The tract at residues 244 to 314 (GGHDERREQE…AAPEAAPAKE (71 aa)) is disordered. Low complexity predominate over residues 302-314 (APAAAPEAAPAKE).

It belongs to the universal ribosomal protein uS2 family.

In Anaeromyxobacter dehalogenans (strain 2CP-C), this protein is Small ribosomal subunit protein uS2.